A 542-amino-acid polypeptide reads, in one-letter code: Chaperonin GroEL (542 aa).

ATP contacts are provided by residues 29–32 (TLGP), 86–90 (DGTTT), Gly-413, 476–478 (NAA), and Asp-492. The disordered stretch occupies residues 521 to 542 (QPDENGPAAGPDMGMGGMGGMM). Gly residues predominate over residues 533-542 (MGMGGMGGMM).

The protein belongs to the chaperonin (HSP60) family. Forms a cylinder of 14 subunits composed of two heptameric rings stacked back-to-back. Interacts with the co-chaperonin GroES.

It localises to the cytoplasm. It carries out the reaction ATP + H2O + a folded polypeptide = ADP + phosphate + an unfolded polypeptide.. Together with its co-chaperonin GroES, plays an essential role in assisting protein folding. The GroEL-GroES system forms a nano-cage that allows encapsulation of the non-native substrate proteins and provides a physical environment optimized to promote and accelerate protein folding. This Listeria innocua serovar 6a (strain ATCC BAA-680 / CLIP 11262) protein is Chaperonin GroEL.